A 73-amino-acid chain; its full sequence is UPF0346 protein LVIS_0790 (73 aa).

Belongs to the UPF0346 family.

The protein is UPF0346 protein LVIS_0790 of Levilactobacillus brevis (strain ATCC 367 / BCRC 12310 / CIP 105137 / JCM 1170 / LMG 11437 / NCIMB 947 / NCTC 947) (Lactobacillus brevis).